Reading from the N-terminus, the 612-residue chain is DEAD-box ATP-dependent RNA helicase 11 (612 aa).

Disordered stretches follow at residues 1 to 70 (MSAS…SGGG) and 83 to 104 (GAGG…WDRR). S2 bears the N-acetylserine mark. Composition is skewed to gly residues over residues 61-70 (SGGGGASGGG) and 83-94 (GAGGGGGGGGGW). Positions 151 to 179 (NTFADIDLGDALNLNIRRCKYVRPTPVQR) match the Q motif motif. Residues 182-366 (IPILLAERDL…ADFMSNYIFL (185 aa)) enclose the Helicase ATP-binding domain. ATP is bound at residue 195–202 (AQTGSGKT). Positions 310 to 313 (DEAD) match the DEAD box motif. In terms of domain architecture, Helicase C-terminal spans 377 to 542 (LITQRVEFVQ…EVPEWLTRYA (166 aa)). The segment at 547-583 (FGGGKKRSGGRFGGRDFRREGSYSRGGGGGGGGGGSD) is disordered. A compositionally biased stretch (basic and acidic residues) spans 559 to 568 (GGRDFRREGS). Positions 570-583 (SRGGGGGGGGGGSD) are enriched in gly residues.

The protein belongs to the DEAD box helicase family. DDX3/DED1 subfamily.

It carries out the reaction ATP + H2O = ADP + phosphate + H(+). The sequence is that of DEAD-box ATP-dependent RNA helicase 11 (RH11) from Arabidopsis thaliana (Mouse-ear cress).